The primary structure comprises 235 residues: Octanoyltransferase (235 aa).

The region spanning Lys52 to Asn229 is the BPL/LPL catalytic domain. Residues Arg89–His96, Ala159–Gly161, and Gly172–Ala174 each bind substrate. Cys190 serves as the catalytic Acyl-thioester intermediate.

The protein belongs to the LipB family.

Its subcellular location is the cytoplasm. The catalysed reaction is octanoyl-[ACP] + L-lysyl-[protein] = N(6)-octanoyl-L-lysyl-[protein] + holo-[ACP] + H(+). Its pathway is protein modification; protein lipoylation via endogenous pathway; protein N(6)-(lipoyl)lysine from octanoyl-[acyl-carrier-protein]: step 1/2. Functionally, catalyzes the transfer of endogenously produced octanoic acid from octanoyl-acyl-carrier-protein onto the lipoyl domains of lipoate-dependent enzymes. Lipoyl-ACP can also act as a substrate although octanoyl-ACP is likely to be the physiological substrate. In Tropheryma whipplei (strain Twist) (Whipple's bacillus), this protein is Octanoyltransferase.